We begin with the raw amino-acid sequence, 560 residues long: NADH-quinone oxidoreductase subunit C/D (560 aa).

The NADH dehydrogenase I subunit C stretch occupies residues 2-157 (NKLENLKQLL…NNQQACTNSL (156 aa)). The tract at residues 175–560 (KYLPLNIGPS…MNLIAGELDR (386 aa)) is NADH dehydrogenase I subunit D.

In the N-terminal section; belongs to the complex I 30 kDa subunit family. It in the C-terminal section; belongs to the complex I 49 kDa subunit family. NDH-1 is composed of 13 different subunits. Subunits NuoB, CD, E, F, and G constitute the peripheral sector of the complex.

The protein resides in the cytoplasm. It localises to the cell inner membrane. It carries out the reaction a quinone + NADH + 5 H(+)(in) = a quinol + NAD(+) + 4 H(+)(out). Its function is as follows. NDH-1 shuttles electrons from NADH, via FMN and iron-sulfur (Fe-S) centers, to quinones in the respiratory chain. The immediate electron acceptor for the enzyme in this species is believed to be ubiquinone. Couples the redox reaction to proton translocation (for every two electrons transferred, four hydrogen ions are translocated across the cytoplasmic membrane), and thus conserves the redox energy in a proton gradient. This is NADH-quinone oxidoreductase subunit C/D from Bdellovibrio bacteriovorus (strain ATCC 15356 / DSM 50701 / NCIMB 9529 / HD100).